The following is a 388-amino-acid chain: Pepsin F (388 aa).

An N-terminal signal peptide occupies residues 1–15 (MKWLGLLGLVALSEC). A propeptide spans 16-58 (LVTIPLMKVKSMRENLRENDILLDYLEKHPYRPTYKLLSGQQD) (activation peptide). The Peptidase A1 domain occupies 74–385 (YIGIISIGTP…DRANNRIGLA (312 aa)). Asp92 is a catalytic residue. 2 cysteine pairs are disulfide-bonded: Cys105–Cys110 and Cys266–Cys270. Residue Asp275 is part of the active site. Residues Cys309 and Cys343 are joined by a disulfide bond.

The protein belongs to the peptidase A1 family.

The protein localises to the secreted. The enzyme catalyses Preferential cleavage: hydrophobic, preferably aromatic, residues in P1 and P1' positions. Cleaves 1-Phe-|-Val-2, 4-Gln-|-His-5, 13-Glu-|-Ala-14, 14-Ala-|-Leu-15, 15-Leu-|-Tyr-16, 16-Tyr-|-Leu-17, 23-Gly-|-Phe-24, 24-Phe-|-Phe-25 and 25-Phe-|-Tyr-26 bonds in the B chain of insulin.. Shows particularly broad specificity; although bonds involving phenylalanine and leucine are preferred, many others are also cleaved to some extent. In Oryctolagus cuniculus (Rabbit), this protein is Pepsin F.